The following is a 149-amino-acid chain: Ribonuclease pancreatic alpha-type (149 aa).

A signal peptide spans Met1–Gly25. 2 residues coordinate substrate: Lys32 and Arg35. His37 (proton acceptor) is an active-site residue. 4 disulfide bridges follow: Cys51/Cys109, Cys65/Cys120, Cys83/Cys135, and Cys90/Cys97. Residues Lys66–Thr70, Lys91, and Arg110 contribute to the substrate site. His144 acts as the Proton donor in catalysis.

This sequence belongs to the pancreatic ribonuclease family. As to quaternary structure, monomer.

The protein localises to the secreted. The catalysed reaction is an [RNA] containing cytidine + H2O = an [RNA]-3'-cytidine-3'-phosphate + a 5'-hydroxy-ribonucleotide-3'-[RNA].. It catalyses the reaction an [RNA] containing uridine + H2O = an [RNA]-3'-uridine-3'-phosphate + a 5'-hydroxy-ribonucleotide-3'-[RNA].. In terms of biological role, endonuclease that catalyzes the cleavage of RNA on the 3' side of pyrimidine nucleotides. Acts on single-stranded and double-stranded RNA. In Rattus fuscipes (Bush rat), this protein is Ribonuclease pancreatic alpha-type.